The chain runs to 431 residues: Adenylosuccinate synthetase (431 aa).

Residues 13–19 (GDEGKGK) and 41–43 (GHT) contribute to the GTP site. Asp14 serves as the catalytic Proton acceptor. 2 residues coordinate Mg(2+): Asp14 and Gly41. IMP-binding positions include 14–17 (DEGK), 39–42 (NAGH), Thr130, Arg144, Gln225, Thr240, and Arg304. His42 functions as the Proton donor in the catalytic mechanism. 300 to 306 (AVTGRPR) serves as a coordination point for substrate. GTP-binding positions include Arg306, 332–334 (KLD), and 415–417 (STG).

The protein belongs to the adenylosuccinate synthetase family. In terms of assembly, homodimer. Requires Mg(2+) as cofactor.

It is found in the cytoplasm. The catalysed reaction is IMP + L-aspartate + GTP = N(6)-(1,2-dicarboxyethyl)-AMP + GDP + phosphate + 2 H(+). The protein operates within purine metabolism; AMP biosynthesis via de novo pathway; AMP from IMP: step 1/2. Its function is as follows. Plays an important role in the de novo pathway of purine nucleotide biosynthesis. Catalyzes the first committed step in the biosynthesis of AMP from IMP. This chain is Adenylosuccinate synthetase, found in Legionella pneumophila (strain Paris).